We begin with the raw amino-acid sequence, 430 residues long: Adenylosuccinate synthetase (430 aa).

GTP is bound by residues 12–18 (GDEGKGK) and 40–42 (GHT). Residue aspartate 13 is the Proton acceptor of the active site. The Mg(2+) site is built by aspartate 13 and glycine 40. IMP contacts are provided by residues 13–16 (DEGK), 38–41 (NAGH), threonine 130, arginine 144, glutamine 224, threonine 239, and arginine 303. The Proton donor role is filled by histidine 41. 299–305 (TNTGRAR) serves as a coordination point for substrate. Residues arginine 305, 331-333 (KLD), and 413-415 (STS) contribute to the GTP site.

It belongs to the adenylosuccinate synthetase family. In terms of assembly, homodimer. It depends on Mg(2+) as a cofactor.

Its subcellular location is the cytoplasm. It carries out the reaction IMP + L-aspartate + GTP = N(6)-(1,2-dicarboxyethyl)-AMP + GDP + phosphate + 2 H(+). It participates in purine metabolism; AMP biosynthesis via de novo pathway; AMP from IMP: step 1/2. Its function is as follows. Plays an important role in the de novo pathway of purine nucleotide biosynthesis. Catalyzes the first committed step in the biosynthesis of AMP from IMP. The protein is Adenylosuccinate synthetase of Hyphomonas neptunium (strain ATCC 15444).